Reading from the N-terminus, the 527-residue chain is N-acetylglucosamine-1-phosphodiester alpha-N-acetylglucosaminidase (527 aa).

The signal sequence occupies residues methionine 1–aspartate 25. The propeptide at phenylalanine 26–arginine 49 is removed in mature form. The Lumenal portion of the chain corresponds to aspartate 50–alanine 463. 5 cysteine pairs are disulfide-bonded: cysteine 116-cysteine 149, cysteine 133-cysteine 324, cysteine 308-cysteine 315, cysteine 363-cysteine 374, and cysteine 381-cysteine 390. Residues asparagine 209, asparagine 215, and asparagine 297 are each glycosylated (N-linked (GlcNAc...) asparagine). The region spanning aspartate 359–serine 391 is the EGF-like domain. 3 N-linked (GlcNAc...) asparagine glycosylation sites follow: asparagine 367, asparagine 389, and asparagine 421. A helical membrane pass occupies residues isoleucine 464 to leucine 484. The Cytoplasmic segment spans residues glycine 485 to aspartate 527. The tract at residues tyrosine 498–glutamate 505 is mediates the interaction with AP4M1. The short motif at tyrosine 500–leucine 503 is the Tyrosine-based internalization motif element. Positions asparagine 523–aspartate 527 match the NPF internalization motif motif.

In terms of assembly, homotetramer arranged as two disulfide-linked homodimers. Interacts with AP4M1. In terms of processing, glycosylated. Contains complex N-linked oligosaccharides with appreciable amounts of sialic acid. Post-translationally, the precursor is cleaved and activated in the trans-Golgi network by a furin endopeptidase.

It localises to the golgi apparatus. The protein localises to the golgi stack membrane. Its subcellular location is the trans-Golgi network. It catalyses the reaction N(4)-[6-(N-acetyl-alpha-D-glucosaminyl-1-phospho)-alpha-D-mannosyl-(1-&gt;2)-alpha-D-mannosyl-(glycan)]-L-asparaginyl-[protein] + H2O = N(4)-[6-phospho-alpha-D-mannosyl-(1-&gt;2)-alpha-D-mannosyl-(glycan)]-L-asparaginyl-[protein] + N-acetyl-D-glucosamine + H(+). The protein operates within protein modification; protein glycosylation. In terms of biological role, catalyzes the second step in the formation of the mannose 6-phosphate targeting signal on lysosomal enzyme oligosaccharides by removing GlcNAc residues from GlcNAc-alpha-P-mannose moieties, which are formed in the first step. Also hydrolyzes UDP-GlcNAc, a sugar donor for Golgi N-acetylglucosaminyltransferases. This chain is N-acetylglucosamine-1-phosphodiester alpha-N-acetylglucosaminidase (NAGPA), found in Bos taurus (Bovine).